Consider the following 333-residue polypeptide: Fructose-1,6-bisphosphatase class 1 (333 aa).

Positions 90, 112, 114, and 115 each coordinate Mg(2+). Substrate is bound by residues 115 to 118 (DGSS), Asn-207, and Lys-273. A Mg(2+)-binding site is contributed by Glu-279.

The protein belongs to the FBPase class 1 family. As to quaternary structure, homotetramer. Requires Mg(2+) as cofactor.

It is found in the cytoplasm. It catalyses the reaction beta-D-fructose 1,6-bisphosphate + H2O = beta-D-fructose 6-phosphate + phosphate. Its pathway is carbohydrate biosynthesis; gluconeogenesis. This Aromatoleum aromaticum (strain DSM 19018 / LMG 30748 / EbN1) (Azoarcus sp. (strain EbN1)) protein is Fructose-1,6-bisphosphatase class 1.